A 209-amino-acid polypeptide reads, in one-letter code: Probable GTP-binding protein EngB (209 aa).

Residues threonine 22–alanine 198 enclose the EngB-type G domain. The Mg(2+) site is built by serine 37 and threonine 59.

It belongs to the TRAFAC class TrmE-Era-EngA-EngB-Septin-like GTPase superfamily. EngB GTPase family. It depends on Mg(2+) as a cofactor.

In terms of biological role, necessary for normal cell division and for the maintenance of normal septation. The chain is Probable GTP-binding protein EngB from Neisseria gonorrhoeae.